Here is a 195-residue protein sequence, read N- to C-terminus: MARSAAIERITKETQIKLSLEIDGKGEAQICTSVPFLDHMLDLFARHGLFDLKVEAHGDIDIDFHHTVEDIGIVLGAAFKEALGDKCGIRRYGNAVVPMDEVLASVATDLSGRPYLVYNVQLPKVKIGDFDVELVREFFQGFVNHCGANLHLNLMYGDNVHHIVEACFKAAARALDQATQLDARIEGVMSTKGKL.

The protein belongs to the imidazoleglycerol-phosphate dehydratase family.

Its subcellular location is the cytoplasm. The catalysed reaction is D-erythro-1-(imidazol-4-yl)glycerol 3-phosphate = 3-(imidazol-4-yl)-2-oxopropyl phosphate + H2O. The protein operates within amino-acid biosynthesis; L-histidine biosynthesis; L-histidine from 5-phospho-alpha-D-ribose 1-diphosphate: step 6/9. This chain is Imidazoleglycerol-phosphate dehydratase, found in Geobacter sp. (strain M21).